A 278-amino-acid chain; its full sequence is Replication protein A 32 kDa subunit B (278 aa).

Residues 70–143 (VVIVGRISRM…RSVNVFSVRP (74 aa)) constitute a DNA-binding region (OB).

This sequence belongs to the replication factor A protein 2 family. As to quaternary structure, heterotrimer of RPA1, RPA2 and RPA3 (canonical replication protein A complex). In terms of processing, phosphorylated in a cell-cycle-dependent manner (from the S phase until mitosis). In response to DNA damage, recruited to DNA-repair nuclear foci, as a hypophosphorylated form.

The protein resides in the nucleus. Functionally, component of the replication protein A complex (RPA) required for DNA recombination, repair and replication. The activity of RPA is mediated by single-stranded DNA binding and protein interactions. Required fo cell division in meristems. Involved in the maintenance of transcriptional epigenetic gene silencing (TGS) at specific loci (including some transposons) by regulating histone H3 acetylation, 'Lys-4' and 'Lys-9' methylation. This chain is Replication protein A 32 kDa subunit B (RPA2B), found in Arabidopsis thaliana (Mouse-ear cress).